A 129-amino-acid polypeptide reads, in one-letter code: Small ribosomal subunit protein uS11 (129 aa).

The protein belongs to the universal ribosomal protein uS11 family. Part of the 30S ribosomal subunit. Interacts with proteins S7 and S18. Binds to IF-3.

Located on the platform of the 30S subunit, it bridges several disparate RNA helices of the 16S rRNA. Forms part of the Shine-Dalgarno cleft in the 70S ribosome. The chain is Small ribosomal subunit protein uS11 from Carboxydothermus hydrogenoformans (strain ATCC BAA-161 / DSM 6008 / Z-2901).